We begin with the raw amino-acid sequence, 288 residues long: 4-hydroxybenzoate octaprenyltransferase (288 aa).

The next 8 membrane-spanning stretches (helical) occupy residues 23-43, 46-66, 98-118, 141-161, 165-185, 213-233, 234-254, and 268-288; these read IGSLLLLWPTLWALWLAGKGI, TKILIVFVLGVFFMRAAGCVV, ILFVVLVLLSFGLVLTLNSMT, LPQVVLGAAFGWSIPMGFAAV, LPLVCWLLLLANICWTVAYDT, LIIGLLQLATLVLMVTIGWLM, NLGGAFYWSILLAGALFVHQQ, and AFLNNNYVGLVLFLGIFISYL.

Belongs to the UbiA prenyltransferase family. Mg(2+) serves as cofactor.

It is found in the cell inner membrane. The catalysed reaction is all-trans-octaprenyl diphosphate + 4-hydroxybenzoate = 4-hydroxy-3-(all-trans-octaprenyl)benzoate + diphosphate. It participates in cofactor biosynthesis; ubiquinone biosynthesis. Functionally, catalyzes the prenylation of para-hydroxybenzoate (PHB) with an all-trans polyprenyl group. Mediates the second step in the final reaction sequence of ubiquinone-8 (UQ-8) biosynthesis, which is the condensation of the polyisoprenoid side chain with PHB, generating the first membrane-bound Q intermediate 3-octaprenyl-4-hydroxybenzoate. This Yersinia enterocolitica serotype O:8 / biotype 1B (strain NCTC 13174 / 8081) protein is 4-hydroxybenzoate octaprenyltransferase.